The sequence spans 274 residues: MADPLGAAGRLPAVFMTPGTSSFADFLSRSAPHLLPGARSGLPGPVTEVAHGTTIVAVAFPGGVIMAGDRRATQGHMIAQRDVEKVHHADDYSCVGYAGTAGVGAELIRLFQVELEHYEKIEGSTLSLDAKANRLAAMVKGNLPMALQGLAVVPLFAGYDLDTGKGRIFSYDIAAAKSEERTYESIGSGSVFAKGSLKKRFRSDLSQDDAVRISVEALYDAADDDSATGGPDVIRKLYPIVAVVTADGYRRYADDEIEPVVTAIIADRSTNSGG.

Residues 1 to 52 constitute a propeptide, removed in mature form; by autocatalysis; it reads MADPLGAAGRLPAVFMTPGTSSFADFLSRSAPHLLPGARSGLPGPVTEVAHG. The Nucleophile role is filled by T53.

The protein belongs to the peptidase T1B family. The 20S proteasome core is composed of 14 alpha and 14 beta subunits that assemble into four stacked heptameric rings, resulting in a barrel-shaped structure. The two inner rings, each composed of seven catalytic beta subunits, are sandwiched by two outer rings, each composed of seven alpha subunits. The catalytic chamber with the active sites is on the inside of the barrel. Has a gated structure, the ends of the cylinder being occluded by the N-termini of the alpha-subunits. Is capped by the proteasome-associated ATPase, ARC.

The protein localises to the cytoplasm. It catalyses the reaction Cleavage of peptide bonds with very broad specificity.. It participates in protein degradation; proteasomal Pup-dependent pathway. With respect to regulation, the formation of the proteasomal ATPase ARC-20S proteasome complex, likely via the docking of the C-termini of ARC into the intersubunit pockets in the alpha-rings, may trigger opening of the gate for substrate entry. Interconversion between the open-gate and close-gate conformations leads to a dynamic regulation of the 20S proteasome proteolysis activity. In terms of biological role, component of the proteasome core, a large protease complex with broad specificity involved in protein degradation. The protein is Proteasome subunit beta of Frankia casuarinae (strain DSM 45818 / CECT 9043 / HFP020203 / CcI3).